We begin with the raw amino-acid sequence, 235 residues long: 2-C-methyl-D-erythritol 4-phosphate cytidylyltransferase (235 aa).

The protein belongs to the IspD/TarI cytidylyltransferase family. IspD subfamily.

The catalysed reaction is 2-C-methyl-D-erythritol 4-phosphate + CTP + H(+) = 4-CDP-2-C-methyl-D-erythritol + diphosphate. The protein operates within isoprenoid biosynthesis; isopentenyl diphosphate biosynthesis via DXP pathway; isopentenyl diphosphate from 1-deoxy-D-xylulose 5-phosphate: step 2/6. Its function is as follows. Catalyzes the formation of 4-diphosphocytidyl-2-C-methyl-D-erythritol from CTP and 2-C-methyl-D-erythritol 4-phosphate (MEP). The sequence is that of 2-C-methyl-D-erythritol 4-phosphate cytidylyltransferase from Pseudomonas fluorescens (strain Pf0-1).